Reading from the N-terminus, the 262-residue chain is MTSPADATTEVAVSQESVAMVTGAGRGIGAATAERLAAEGMAVIVVDRTEQDTRATVAAIRTAGGRARGIGCDVAVAQAVTAAVATAVEEFGRIDVLVNCAGINRDRLLLTMGDQEWDTVLDVNLGGTMRCSFAVGRHMRRQGHGRIINFSSVAARGNAGQTNYATAKGAIAGFTRTLAAELGPHGVTVNAIAPGFVATPMVDELAERLGGDRDSVMSEAAKSSAVGRIGTPEEIAATVVFVARPESGYLTGETVHVDGGRP.

NADP(+) is bound by residues 23-26 (GAGR) and 73-74 (DV). Ser152 is a substrate binding site. Tyr164 functions as the Proton acceptor in the catalytic mechanism. Residue 164-168 (YATAK) coordinates NADP(+).

This sequence belongs to the short-chain dehydrogenases/reductases (SDR) family. As to quaternary structure, heterotetramer; the NovJ(2)K(2) heterotetramer is composed of subunits of 2 NovJ and 2 subunits of NovK.

It participates in antibiotic biosynthesis; novobiocin biosynthesis. Its function is as follows. Catalytic subunit of the NovJ(2)K(2) heterotetramer that catalyzes the NADPH-dependent reduction of the tyrosyl moiety of L-beta-OH-Tyr-S-NovH intermediate to yield the tethered beta-ketotyrosyl-S-NovH in the novobiocin biosynthesis pathway. Novobiocin is an aminocoumarin family antibiotic that targets bacterial DNA gyrases. The sequence is that of Short-chain reductase protein NovJ (novJ) from Streptomyces niveus (Streptomyces spheroides).